Reading from the N-terminus, the 292-residue chain is 2-(5''-triphosphoribosyl)-3'-dephosphocoenzyme-A synthase (292 aa).

This sequence belongs to the CitG/MdcB family.

The enzyme catalyses 3'-dephospho-CoA + ATP = 2'-(5''-triphospho-alpha-D-ribosyl)-3'-dephospho-CoA + adenine. Its function is as follows. Catalyzes the formation of 2-(5''-triphosphoribosyl)-3'-dephosphocoenzyme-A, the precursor of the prosthetic group of the holo-acyl carrier protein (gamma chain) of citrate lyase, from ATP and dephospho-CoA. The sequence is that of 2-(5''-triphosphoribosyl)-3'-dephosphocoenzyme-A synthase from Escherichia coli O17:K52:H18 (strain UMN026 / ExPEC).